The sequence spans 438 residues: sn-glycerol-3-phosphate-binding periplasmic protein UgpB (438 aa).

Residues methionine 1 to alanine 23 form the signal peptide. Sn-glycerol 3-phosphate-binding residues include tyrosine 65, glutamate 89, serine 144, serine 270, glycine 307, tyrosine 346, and arginine 397.

The protein belongs to the bacterial solute-binding protein 1 family. In terms of assembly, the complex is composed of two ATP-binding proteins (UgpC), two transmembrane proteins (UgpA and UgpE) and a solute-binding protein (UgpB).

Its subcellular location is the periplasm. Its function is as follows. Part of the ABC transporter complex UgpBAEC involved in sn-glycerol-3-phosphate (G3P) import. Binds G3P. In Shigella dysenteriae serotype 1 (strain Sd197), this protein is sn-glycerol-3-phosphate-binding periplasmic protein UgpB (ugpB).